Here is a 300-residue protein sequence, read N- to C-terminus: MNLPKKVRLVEVGPRDGLQNEKQPIEVADKIRLVDDLSAAGLDYIEVGSFVSPKWVPQMAGSAEVFAGIRQRPGVTYAALAPNLKGFEAALESGVKEVAVFAAASEAFSQRNINCSIKDSLERFVPVLEAARQHQVRVRGYISCVLGCPYDGDVDPRQVAWVARELQQMGCYEVSLGDTIGVGTAGATRRLIEAVASEVPRERLAGHFHDTYGQALANIYASLLEGIAVFDSSVAGLGGCPYAKGATGNVASEDVLYLLNGLEIHTGVDMHALVDAGQRICAVLGKSNGSRAAKALLAKA.

One can recognise a Pyruvate carboxyltransferase domain in the interval 7 to 274 (VRLVEVGPRD…HTGVDMHALV (268 aa)). Arginine 15 contacts substrate. A divalent metal cation contacts are provided by aspartate 16, histidine 207, and histidine 209. Cysteine 240 is a catalytic residue. Asparagine 249 lines the a divalent metal cation pocket.

The protein belongs to the HMG-CoA lyase family. Homodimer. The cofactor is Mg(2+). It depends on Mn(2+) as a cofactor.

The enzyme catalyses 3-hydroxy-3-(4-methylpent-3-en-1-yl)glutaryl-CoA = 7-methyl-3-oxooct-6-enoyl-CoA + acetate. It catalyses the reaction (3S)-3-hydroxy-3-methylglutaryl-CoA = acetoacetate + acetyl-CoA. It functions in the pathway metabolic intermediate metabolism; (S)-3-hydroxy-3-methylglutaryl-CoA degradation; acetoacetate from (S)-3-hydroxy-3-methylglutaryl-CoA: step 1/1. Involved in the L-leucine, isovalerate and acyclic monoterpene catabolism. Catalyzes the cleavage of 3-hydroxy-3-methylglutaryl-CoA (HMG-CoA) to yield acetyl-CoA and acetoacetate. It can also catalyze the cleavage of 3-hydroxy-3-isohexenylglutaryl-CoA (HIHG_CoA) to yield 7-methyl-3-oxooct-6-enoyl-CoA and acetate. This is 3-hydroxy-3-isohexenylglutaryl-CoA/hydroxy-methylglutaryl-CoA lyase from Pseudomonas aeruginosa (strain ATCC 15692 / DSM 22644 / CIP 104116 / JCM 14847 / LMG 12228 / 1C / PRS 101 / PAO1).